The chain runs to 563 residues: AP-1-like transcription factor yap1 (563 aa).

Residues Leu23–Leu179 form a disordered region. Residues Gln35–Ser42 carry the Bipartite nuclear localization signal motif. The segment covering Gln36–Pro48 has biased composition (basic and acidic residues). Residues Pro52–Asn67 are compositionally biased toward low complexity. Positions Lys68 to Gly75 match the Bipartite nuclear localization signal motif. Over residues Gly79–Phe94 the composition is skewed to acidic residues. Basic and acidic residues-rich tracts occupy residues Ser112–Ala144 and Ala170–Leu179. Residues Ser154–Tyr217 enclose the bZIP domain. The basic motif stretch occupies residues Lys159–Lys180. The segment at Leu182–Leu189 is leucine-zipper. A transcription activation 1 region spans residues Gln211 to Asn332. Disordered regions lie at residues Ile267–Asp380 and Asp394–Pro420. Residues Ser284–Val296 are n-CRD. Polar residues predominate over residues Glu300–Gly309. The segment covering Ser336–Ser362 has biased composition (low complexity). Composition is skewed to polar residues over residues Asn363 to Asp380 and Glu401 to Gln416. A transcription activation 2 region spans residues Lys377–Asp459. Cystine bridges form between Cys510–Cys534, Cys510–Cys543, and Cys534–Cys543. The tract at residues Cys510–Cys543 is c-CRD. The Nuclear export signal motif lies at Ile528–Ser535.

Belongs to the bZIP family. YAP subfamily. Depending on the oxidative stress inducing agent, yap1 can undergo two distinct conformational changes, both involving disulfide bond formation, and both masking the nuclear export signal, thus abolishing nuclear export.

The protein resides in the nucleus. It is found in the cytoplasm. In terms of biological role, transcription activator involved in oxidative stress response and redox homeostasis. Regulates the transcription of genes encoding antioxidant enzymes and components of the cellular thiol-reducing pathways. The chain is AP-1-like transcription factor yap1 from Aspergillus oryzae (strain ATCC 42149 / RIB 40) (Yellow koji mold).